Consider the following 274-residue polypeptide: HTH-type transcriptional regulator GadX (274 aa).

Residues 145-242 (TRVCTVINNN…GMTPTEYQER (98 aa)) form the HTH araC/xylS-type domain. 2 consecutive DNA-binding regions (H-T-H motif) follow at residues 162-183 (ARIA…REEE) and 209-232 (IKRV…RNYY).

Homodimer.

In terms of biological role, positively regulates the expression of about fifteen genes involved in acid resistance such as gadA, gadB and gadC. Depending on the conditions (growth phase and medium), can repress gadW. In Escherichia coli O157:H7, this protein is HTH-type transcriptional regulator GadX (gadX).